A 343-amino-acid chain; its full sequence is Small ribosomal subunit biogenesis GTPase RsgA (343 aa).

In terms of domain architecture, CP-type G spans 116 to 275; sequence RGQLKPVAAN…LIDSPGIREF (160 aa). GTP is bound by residues 163-166 and 217-225; these read NKFD and GQSGVGKSS. Zn(2+)-binding residues include Cys299, Cys304, His306, and Cys312.

It belongs to the TRAFAC class YlqF/YawG GTPase family. RsgA subfamily. In terms of assembly, monomer. Associates with 30S ribosomal subunit, binds 16S rRNA. It depends on Zn(2+) as a cofactor.

It is found in the cytoplasm. In terms of biological role, one of several proteins that assist in the late maturation steps of the functional core of the 30S ribosomal subunit. Helps release RbfA from mature subunits. May play a role in the assembly of ribosomal proteins into the subunit. Circularly permuted GTPase that catalyzes slow GTP hydrolysis, GTPase activity is stimulated by the 30S ribosomal subunit. In Pseudomonas fluorescens (strain SBW25), this protein is Small ribosomal subunit biogenesis GTPase RsgA.